The primary structure comprises 551 residues: Hydroxylamine reductase (551 aa).

[2Fe-2S] cluster contacts are provided by C3, C6, C18, and C25. 8 residues coordinate hybrid [4Fe-2O-2S] cluster: H249, E273, C317, C405, C433, C459, E493, and K495. The residue at position 405 (C405) is a Cysteine persulfide.

The protein belongs to the HCP family. [2Fe-2S] cluster is required as a cofactor. Requires hybrid [4Fe-2O-2S] cluster as cofactor.

It is found in the cytoplasm. It carries out the reaction A + NH4(+) + H2O = hydroxylamine + AH2 + H(+). In terms of biological role, catalyzes the reduction of hydroxylamine to form NH(3) and H(2)O. This is Hydroxylamine reductase from Actinobacillus pleuropneumoniae serotype 7 (strain AP76).